Here is a 192-residue protein sequence, read N- to C-terminus: Ion-translocating oxidoreductase complex subunit B (192 aa).

The tract at residues 1-26 (MNAIWIAVAAVSLLGLAFGAILGYAS) is hydrophobic. The 4Fe-4S domain occupies 32–91 (EDDPVVEKIDEILPQSQCGQCGYPGCRPYAEAISCNGEKINRCAPGGEAVMLKIAELLNV). [4Fe-4S] cluster is bound by residues Cys-49, Cys-52, Cys-57, Cys-74, Cys-117, Cys-120, Cys-123, Cys-127, Cys-147, Cys-150, Cys-153, and Cys-157. 4Fe-4S ferredoxin-type domains lie at 108 to 137 (MVAV…GATR) and 138 to 167 (AMHT…LQPV).

It belongs to the 4Fe4S bacterial-type ferredoxin family. RnfB subfamily. As to quaternary structure, the complex is composed of six subunits: RsxA, RsxB, RsxC, RsxD, RsxE and RsxG. It depends on [4Fe-4S] cluster as a cofactor.

It is found in the cell inner membrane. Functionally, part of a membrane-bound complex that couples electron transfer with translocation of ions across the membrane. Required to maintain the reduced state of SoxR. The protein is Ion-translocating oxidoreductase complex subunit B of Escherichia coli O127:H6 (strain E2348/69 / EPEC).